Here is a 197-residue protein sequence, read N- to C-terminus: Imidazoleglycerol-phosphate dehydratase (197 aa).

Belongs to the imidazoleglycerol-phosphate dehydratase family.

It is found in the cytoplasm. It carries out the reaction D-erythro-1-(imidazol-4-yl)glycerol 3-phosphate = 3-(imidazol-4-yl)-2-oxopropyl phosphate + H2O. It functions in the pathway amino-acid biosynthesis; L-histidine biosynthesis; L-histidine from 5-phospho-alpha-D-ribose 1-diphosphate: step 6/9. This is Imidazoleglycerol-phosphate dehydratase from Marinobacter nauticus (strain ATCC 700491 / DSM 11845 / VT8) (Marinobacter aquaeolei).